Consider the following 266-residue polypeptide: Glucosamine-6-phosphate deaminase (266 aa).

The active-site Proton acceptor; for enolization step is D72. D141 acts as the For ring-opening step in catalysis. H143 (proton acceptor; for ring-opening step) is an active-site residue. Catalysis depends on E148, which acts as the For ring-opening step.

It belongs to the glucosamine/galactosamine-6-phosphate isomerase family. NagB subfamily. Homohexamer.

The enzyme catalyses alpha-D-glucosamine 6-phosphate + H2O = beta-D-fructose 6-phosphate + NH4(+). It functions in the pathway amino-sugar metabolism; N-acetylneuraminate degradation; D-fructose 6-phosphate from N-acetylneuraminate: step 5/5. Allosterically activated by N-acetylglucosamine 6-phosphate (GlcNAc6P). Its function is as follows. Catalyzes the reversible isomerization-deamination of glucosamine 6-phosphate (GlcN6P) to form fructose 6-phosphate (Fru6P) and ammonium ion. The sequence is that of Glucosamine-6-phosphate deaminase from Aeromonas salmonicida (strain A449).